The sequence spans 333 residues: Elongation factor Ts, mitochondrial (333 aa).

Residues 1–17 (MLRTLRPTLPSRCLRLY) constitute a mitochondrion transit peptide.

This sequence belongs to the EF-Ts family.

It localises to the mitochondrion. Associates with the EF-Tu.GDP complex and induces the exchange of GDP to GTP. It remains bound to the aminoacyl-tRNA.EF-Tu.GTP complex up to the GTP hydrolysis stage on the ribosome. The polypeptide is Elongation factor Ts, mitochondrial (Coprinopsis cinerea (strain Okayama-7 / 130 / ATCC MYA-4618 / FGSC 9003) (Inky cap fungus)).